Reading from the N-terminus, the 443-residue chain is Cyclic GMP-AMP synthase (443 aa).

Position 61 (Ser-61) interacts with ATP. Residues Asp-78 and Asp-80 contribute to the active site. Asp-80 is a binding site for Mg(2+). Asn-124 is a binding site for ATP. Residue Asp-138 is part of the active site. Position 138 (Asp-138) interacts with Mg(2+). Residue Leu-208 coordinates ATP.

This sequence belongs to the CD-NTase family. B06 subfamily. Mg(2+) serves as cofactor.

The catalysed reaction is GTP + ATP = 3',3'-cGAMP + 2 diphosphate. It carries out the reaction UTP + ATP = 3',3'-cUAMP + 2 diphosphate. It catalyses the reaction 2 ATP = 3',3'-c-di-AMP + 2 diphosphate. The enzyme catalyses 2 GTP = 3',3'-c-di-GMP + 2 diphosphate. The catalysed reaction is UTP + GTP = 3',3'-cGMP-UMP + 2 diphosphate. Functionally, cyclic nucleotide synthase (second messenger synthase) of a CBASS antivirus system. CBASS (cyclic oligonucleotide-based antiphage signaling system) provides immunity against bacteriophages. The CD-NTase protein (CdnB, this protein) synthesizes cyclic nucleotides in response to infection; these serve as specific second messenger signals. The signals activate a diverse range of effectors, leading to bacterial cell death and thus abortive phage infection. The effector protein for this system is membrane protein Cap15. In terms of biological role, catalyzes the synthesis of 3',3'-cyclic GMP-AMP (3'3'-cGAMP) from GTP and ATP, a second messenger in cell signal transduction. Also makes cyclic UMP-AMP, cyclic UMP-GMP, cyclic di-AMP and cyclic-di-GMP. Protects E.coli against phage infection. When the CBASS operon (cdnB-cap15) is introduced in E.coli MG1655 there is about 100-fold protection against phage T2 and about 10-fold protection against phage T5 and T6. The polypeptide is Cyclic GMP-AMP synthase (Escherichia albertii).